A 276-amino-acid polypeptide reads, in one-letter code: Ribosomal RNA small subunit methyltransferase A (276 aa).

Residues N27, L29, G54, E75, D101, and N122 each coordinate S-adenosyl-L-methionine.

Belongs to the class I-like SAM-binding methyltransferase superfamily. rRNA adenine N(6)-methyltransferase family. RsmA subfamily.

The protein localises to the cytoplasm. The catalysed reaction is adenosine(1518)/adenosine(1519) in 16S rRNA + 4 S-adenosyl-L-methionine = N(6)-dimethyladenosine(1518)/N(6)-dimethyladenosine(1519) in 16S rRNA + 4 S-adenosyl-L-homocysteine + 4 H(+). In terms of biological role, specifically dimethylates two adjacent adenosines (A1518 and A1519) in the loop of a conserved hairpin near the 3'-end of 16S rRNA in the 30S particle. May play a critical role in biogenesis of 30S subunits. This chain is Ribosomal RNA small subunit methyltransferase A, found in Brucella abortus (strain S19).